The primary structure comprises 96 residues: MAKYEILYIIRPNIEEEAKNALVARFDAVLTDNGATIVESKDWEKRRLAYEIQDFREGLYHVINVETEDAHALNEFDRLSKINNDILRHMIVKLDA.

This sequence belongs to the bacterial ribosomal protein bS6 family.

In terms of biological role, binds together with bS18 to 16S ribosomal RNA. This Streptococcus mutans serotype c (strain ATCC 700610 / UA159) protein is Small ribosomal subunit protein bS6.